A 668-amino-acid chain; its full sequence is Exoribonuclease 2 (668 aa).

The RNB domain occupies 193-521; sequence RIEMTHVPFV…INHRMLKAVI (329 aa). The S1 motif domain occupies 568–650; the sequence is QTCFTGEIFD…ENRSLVAKPT (83 aa).

It belongs to the RNR ribonuclease family. RNase II subfamily.

Its subcellular location is the cytoplasm. The enzyme catalyses Exonucleolytic cleavage in the 3'- to 5'-direction to yield nucleoside 5'-phosphates.. In terms of biological role, involved in mRNA degradation. Hydrolyzes single-stranded polyribonucleotides processively in the 3' to 5' direction. This chain is Exoribonuclease 2, found in Vibrio parahaemolyticus serotype O3:K6 (strain RIMD 2210633).